The primary structure comprises 75 residues: UPF0352 protein VSAL_I1058 (75 aa).

The protein belongs to the UPF0352 family.

The polypeptide is UPF0352 protein VSAL_I1058 (Aliivibrio salmonicida (strain LFI1238) (Vibrio salmonicida (strain LFI1238))).